Reading from the N-terminus, the 484-residue chain is Tribbles (484 aa).

The span at methionine 1–tyrosine 23 shows a compositional bias: polar residues. The interval methionine 1 to glutamate 51 is disordered. Over residues serine 24–serine 49 the composition is skewed to low complexity. The region spanning tyrosine 129–leucine 397 is the Protein kinase domain. Acidic residues-rich tracts occupy residues alanine 420 to glycine 437 and proline 475 to glycine 484. Disordered stretches follow at residues alanine 420–aspartate 443 and methionine 464–glycine 484.

It belongs to the protein kinase superfamily. CAMK Ser/Thr protein kinase family. Tribbles subfamily. In terms of assembly, interacts with slbo. Interacts with Akt1. As to expression, expressed throughout the brain with highest levels of expression detected in the cell body rind and lower levels of expression detected in the neurophil (at protein level).

It localises to the nucleus. The protein localises to the cytoplasm. The protein resides in the cell cortex. In terms of biological role, adapter protein that negatively regulates different signaling pathways to coordinate cell differentiation, proliferation, migration and growth. Functions by binding to key regulatory proteins and either blocks their activity or regulates their turnover by the proteasome. In various developing tissues functions as a cell cycle regulator that mediates cell proliferation according to the requirements of the developmental program. Acts by inducing the proteasomal degradation of the CD25 mitotic activators stg and twe at critical stages of development to delay entry into mitosis and thus mediate cell proliferation. During gastrulation, negatively regulates stg to delay mitosis in the ventral region of the embryonic mesoderm thus allowing invagination to be completed before cell division takes place. Delaying stg-dependent mitosis during bristle development and in migrating germline pole cells also arrests their cell divisions, whereas in cystocytes it promotes their cell divisions. Involved in the regulation of the mid-blastula transition; promotes the destruction of twe resulting in the cell cycle arrest in G2 of cycle 14 which delays mitosis and thus reduces cell proliferation allowing cell fate specification and morphogenesis to take place. In germline cells, blocks border cell migration during oogenesis by binding to slbo/C/EBP and promoting its ubiquitination and degradation by the proteasome. May function in a negative feedback loop with slbo to coordinate proper border cell migration. During tissue growth negatively regulates insulin signaling by binding to Akt1 and blocking its phosphorylation-dependent activation. However it may also function downstream in the insulin signaling pathway, acting with Akt1 to direct foxo degradation. Essential for the proper formation of operant place and aversive olfactory memories. The chain is Tribbles from Drosophila melanogaster (Fruit fly).